The chain runs to 121 residues: Large ribosomal subunit protein uL18 (121 aa).

It belongs to the universal ribosomal protein uL18 family. Part of the 50S ribosomal subunit; part of the 5S rRNA/L5/L18/L25 subcomplex. Contacts the 5S and 23S rRNAs.

Its function is as follows. This is one of the proteins that bind and probably mediate the attachment of the 5S RNA into the large ribosomal subunit, where it forms part of the central protuberance. In Paraburkholderia xenovorans (strain LB400), this protein is Large ribosomal subunit protein uL18.